The primary structure comprises 207 residues: Thymidylate kinase (207 aa).

12-19 (GVDGAGKS) contributes to the ATP binding site.

This sequence belongs to the thymidylate kinase family.

The catalysed reaction is dTMP + ATP = dTDP + ADP. Functionally, phosphorylation of dTMP to form dTDP in both de novo and salvage pathways of dTTP synthesis. The polypeptide is Thymidylate kinase (Bordetella petrii (strain ATCC BAA-461 / DSM 12804 / CCUG 43448)).